Here is a 202-residue protein sequence, read N- to C-terminus: uncharacterized protein (202 aa).

The tract at residues 178–202 (VCSSEDSEADRYSDYGWGGPSSPFN) is disordered.

This is an uncharacterized protein from Homo sapiens (Human).